We begin with the raw amino-acid sequence, 370 residues long: DNA primase small subunit PriS (370 aa).

Catalysis depends on residues D92, D94, and D272.

The protein belongs to the eukaryotic-type primase small subunit family. Heterodimer of a small subunit (PriS) and a large subunit (PriL). Mg(2+) serves as cofactor. It depends on Mn(2+) as a cofactor.

In terms of biological role, catalytic subunit of DNA primase, an RNA polymerase that catalyzes the synthesis of short RNA molecules used as primers for DNA polymerase during DNA replication. The small subunit contains the primase catalytic core and has DNA synthesis activity on its own. Binding to the large subunit stabilizes and modulates the activity, increasing the rate of DNA synthesis while decreasing the length of the DNA fragments, and conferring RNA synthesis capability. The DNA polymerase activity may enable DNA primase to also catalyze primer extension after primer synthesis. May also play a role in DNA repair. This chain is DNA primase small subunit PriS, found in Picrophilus torridus (strain ATCC 700027 / DSM 9790 / JCM 10055 / NBRC 100828 / KAW 2/3).